The sequence spans 335 residues: Tetraacyldisaccharide 4'-kinase (335 aa).

58-65 (TVGGVGKT) provides a ligand contact to ATP.

This sequence belongs to the LpxK family.

It catalyses the reaction a lipid A disaccharide + ATP = a lipid IVA + ADP + H(+). The protein operates within glycolipid biosynthesis; lipid IV(A) biosynthesis; lipid IV(A) from (3R)-3-hydroxytetradecanoyl-[acyl-carrier-protein] and UDP-N-acetyl-alpha-D-glucosamine: step 6/6. Its function is as follows. Transfers the gamma-phosphate of ATP to the 4'-position of a tetraacyldisaccharide 1-phosphate intermediate (termed DS-1-P) to form tetraacyldisaccharide 1,4'-bis-phosphate (lipid IVA). In Caulobacter sp. (strain K31), this protein is Tetraacyldisaccharide 4'-kinase.